We begin with the raw amino-acid sequence, 37 residues long: Peptide encoded by miPEP164a (37 aa).

Regulatory peptide encoded by the primary transcript (pri-miR164a) of the microRNA miR164a that enhances the accumulation of its corresponding mature miRNA. Acts probably as a transcriptional activator of its corresponding pri-miRNA. This chain is Peptide encoded by miPEP164a, found in Arabidopsis thaliana (Mouse-ear cress).